Here is a 269-residue protein sequence, read N- to C-terminus: Type II iodothyronine deiodinase (269 aa).

Over 1–9 (MGILSVDLL) the chain is Lumenal. Residues 10–34 (ITLQILPVFFSNCLFLALYDSVILL) form a helical; Signal-anchor for type III membrane protein membrane-spanning segment. Topologically, residues 35-269 (KHVVLLLSRS…KNFSKRUKLD (235 aa)) are cytoplasmic. The tract at residues 83–103 (NSSVVHVSSPEGGDTSGNGAQ) is disordered. U133 is a catalytic residue. 2 non-standard amino acids (selenocysteine) are found at residues U133 and U266.

The protein belongs to the iodothyronine deiodinase family. As to quaternary structure, predominantly monomer. Can form homodimers but homodimerization is not essential for enzyme activity. Interacts with USP20 and USP33. Interacts with MARCHF6. In terms of processing, ubiquitinated by MARCHF6, leading to its degradation by the proteasome. Deubiquitinated by USP20 and USP33. Highly expressed in thyroid, mammary and pituitary glands, then in hypothalamus. Low levels detected in diaphragm, heart, kidney and lung.

The protein resides in the endoplasmic reticulum membrane. The catalysed reaction is 3,3',5-triiodo-L-thyronine + iodide + A + H(+) = L-thyroxine + AH2. It catalyses the reaction 3,3'-diiodo-L-thyronine + iodide + A + H(+) = 3,3',5'-triiodo-L-thyronine + AH2. The enzyme catalyses 3'-iodo-L-thyronine + iodide + A + H(+) = 3',5'-diiodo-L-thyronine + AH2. It carries out the reaction 3,3'-diiodothyronamine + iodide + A + H(+) = 3,3',5'-triiodothyronamine + AH2. The catalysed reaction is 3'-iodothyronamine + iodide + A + H(+) = 3',5'-diiodothyronamine + AH2. Its function is as follows. Plays a crucial role in the metabolism of thyroid hormones (TH) and has specific roles in TH activation and inactivation by deiodination. Catalyzes the deiodination of L-thyroxine (T4) to 3,5,3'-triiodothyronine (T3), 3,3',5'-triiodothyronine (rT3) to 3,3'-diiodothyronine (3,3'-T2) and 3',5'-diiodothyronine (3',5'-T2) to 3'-monoiodothyronine (3'-T1) via outer-ring deiodination (ORD). Catalyzes the phenolic ring deiodinations of 3,3',5'-triiodothyronamine and 3',5'- diiodothyronamine. The protein is Type II iodothyronine deiodinase (DIO2) of Bos taurus (Bovine).